A 783-amino-acid polypeptide reads, in one-letter code: MRWPCSSRFRGLWPEAAPWAVLLALGVPGWVLAVSATVAAVVPEQHVSSAGQAPLDWLLTDRGPFHRAQEYADFMERYRQGFTTRYRIYREFARWKVNNLALERKDFFSLPLPLAPEFVRNIRLLGRRPNLQQVTENLIKKYGTHFLLSATLGGEESLTIFVDKRKLSRKSETLGGVPVVGGTGNSSAVSLETLHQLAASYFIDRESTLRRLHHIQIATGAIKVTETRTGPLGCSNYDNLDSVSSVLVQSPENKVQLLGLQVLLPEHLRERFVAAALSYITCSSEGELVCRENDCWCKCSPTFPECNCPDADIQAMEDSLLQIQDSWATHNRQFEESEEFQTLLKRLPSDRFLNSTAISQYWTMDANLQHRYQQLGASLKVLLKKMHRIVRRLFNLCKRCHRQPRFRLPKERSLSFWWNRIQSLLYCGESTFPGTFLEQSHSCTCPYDQSSCQGPIPCALGEGPACAHCASDNTTRCGSCNPGYVLAQGLCRPEVAESLENFLGLETDLQDLELKYLLQKRDSRIEVHSIFISNDMRLGSWFDPSWRKRMLLTLKSNKYKPGLVHVMLALSLQICLTKNSTLEPVMAIYVNPFGGSHSESWFMPVNEGSFPDWERTNVDAAAQCQNWTITLGNRWKTFFETVHVYLRSRIKSLDDSSNETIYYEPLEMTDPSKNLGYMKINTLQVFGYSLPFDPDAIRDLILQLDYPYTQGSQDSALLQLIELRDRVNQLSPPGKVRLDLFSCLLRHRLKLANNEVGRIQSSLRAFNSKLPNPVEYETGKLCS.

Positions 1–33 are cleaved as a signal peptide; it reads MRWPCSSRFRGLWPEAAPWAVLLALGVPGWVLA. Residues 85 to 281 form the MACPF domain; the sequence is RYRIYREFAR…FVAAALSYIT (197 aa). N-linked (GlcNAc...) asparagine glycosylation is found at Asn-185, Asn-354, Asn-473, Asn-579, Asn-626, and Asn-658.

Belongs to the BRINP family. Expressed in olfactory bulb, cerebellum and neuronal layers in hippocampus.

The protein resides in the secreted. Inhibits neuronal cell proliferation by negative regulation of the cell cycle transition. In Rattus norvegicus (Rat), this protein is BMP/retinoic acid-inducible neural-specific protein 2 (Brinp2).